A 193-amino-acid polypeptide reads, in one-letter code: Serine recombinase gin (193 aa).

The Resolvase/invertase-type recombinase catalytic domain occupies 1 to 134 (MLIGYVRVST…AGLAAARNKG (134 aa)). The O-(5'-phospho-DNA)-serine intermediate role is filled by S9. The segment at residues 138-183 (GRPPKLTKAEWEQAGRLLAQGIPRKQVALIYDVALSTLYKKHPAKR) is a DNA-binding region (H-T-H motif).

It belongs to the site-specific recombinase resolvase family. As to quaternary structure, homodimer. During inversion, two dimers associate to form a homotetramer.

The protein localises to the host cytoplasm. Functionally, performs inversion of a viral 3 kp segment (G-segment) that encodes two alternate pairs of tail fiber proteins thereby modifying the host specificity of the virus. Binds as a dimer to the viral gix sites which are 34-bp palindromic sequences that flank the invertible G-segment. Catalyzes site-specific recombination in the presence of the host factor Fis. Gin dimers bound to each of the gix sites and host factor Fis bound to the enhancer come together to form the synaptic complex. Each Gin monomer introduces a nick and becomes covalently attached to the 5'-phosphate of the DNA, resulting in double-stranded staggered breaks at both recombination sites. A 180 degrees rotation of one of the two Gin dimers followed by religation of the DNA leads to the inversion of the G-segment (G+ or G- orientation). The polypeptide is Serine recombinase gin (gin) (Escherichia phage Mu (Bacteriophage Mu)).